A 333-amino-acid chain; its full sequence is Taste receptor type 2 member 38 (333 aa).

At 1–17 the chain is on the extracellular side; it reads MLTLTRIRTVSYEVRST. Residues 18-38 traverse the membrane as a helical segment; it reads FLFISVLEFAVGFLTNAFVFL. The Cytoplasmic segment spans residues 39–55; it reads VNFWDVVKRQPLSNSDC. Residues 56–76 form a helical membrane-spanning segment; it reads VLLCLSISRLFLHGLLFLSAI. The Extracellular portion of the chain corresponds to 77-94; it reads QLTHFQKLSEPLNHSYQA. A helical membrane pass occupies residues 95 to 115; it reads IIMLWMIANQANLWLAACLSL. Over 116-142 the chain is Cytoplasmic; sequence LYCSKLIRFSHTFLICLASWVSRKISQ. The chain crosses the membrane as a helical span at residues 143–163; the sequence is MLLGIILCSCICTVLCVWCFF. Over 164–190 the chain is Extracellular; that stretch reads SRPHFTVTTVLFMNNNTRLNWQIKDLN. The N-linked (GlcNAc...) asparagine glycan is linked to Asn-178. The chain crosses the membrane as a helical span at residues 191–211; sequence LFYSFLFCYLWSVPPFLLFLV. Topologically, residues 212 to 251 are cytoplasmic; sequence SSGMLTVSLGRHMRTMKVYIRDSRDPSLEAHIKALKSLVS. The chain crosses the membrane as a helical span at residues 252–272; it reads FFCFFVISSCAAFISVPLLIL. Topologically, residues 273–276 are extracellular; sequence WRDK. Residues 277–297 form a helical membrane-spanning segment; that stretch reads IGVMVCVGIMAACPSGHAAVL. Residues 298–333 are Cytoplasmic-facing; it reads ISGNAKLRRAVTTILLWAQSSLKVRADHKADSRTPC.

The protein belongs to the G-protein coupled receptor T2R family.

The protein localises to the membrane. Receptor that may play a role in the perception of bitterness and is gustducin-linked. May play a role in sensing the chemical composition of the gastrointestinal content. The activity of this receptor may stimulate alpha gustducin, mediate PLC-beta-2 activation and lead to the gating of TRPM5. In Gorilla gorilla gorilla (Western lowland gorilla), this protein is Taste receptor type 2 member 38 (TAS2R38).